Consider the following 429-residue polypeptide: 3-phosphoshikimate 1-carboxyvinyltransferase (429 aa).

The 3-phosphoshikimate site is built by lysine 23, serine 24, and arginine 28. Lysine 23 contacts phosphoenolpyruvate. Phosphoenolpyruvate contacts are provided by glycine 95 and arginine 123. 3-phosphoshikimate is bound by residues serine 168, glutamine 170, aspartate 316, and lysine 343. Residue glutamine 170 coordinates phosphoenolpyruvate. Aspartate 316 functions as the Proton acceptor in the catalytic mechanism. 2 residues coordinate phosphoenolpyruvate: arginine 347 and arginine 389.

It belongs to the EPSP synthase family. Monomer.

It is found in the cytoplasm. The enzyme catalyses 3-phosphoshikimate + phosphoenolpyruvate = 5-O-(1-carboxyvinyl)-3-phosphoshikimate + phosphate. The protein operates within metabolic intermediate biosynthesis; chorismate biosynthesis; chorismate from D-erythrose 4-phosphate and phosphoenolpyruvate: step 6/7. Catalyzes the transfer of the enolpyruvyl moiety of phosphoenolpyruvate (PEP) to the 5-hydroxyl of shikimate-3-phosphate (S3P) to produce enolpyruvyl shikimate-3-phosphate and inorganic phosphate. The sequence is that of 3-phosphoshikimate 1-carboxyvinyltransferase from Bacillus cereus (strain ZK / E33L).